The following is a 236-amino-acid chain: Purine nucleoside phosphorylase DeoD-type (236 aa).

His-5 is an a purine D-ribonucleoside binding site. Phosphate-binding positions include Gly-21, Arg-25, Arg-44, and 88-91 (RIGS). A purine D-ribonucleoside is bound by residues 180-182 (EME) and 204-205 (SD). Residue Asp-205 is the Proton donor of the active site.

It belongs to the PNP/UDP phosphorylase family. Homohexamer; trimer of homodimers.

It carries out the reaction a purine D-ribonucleoside + phosphate = a purine nucleobase + alpha-D-ribose 1-phosphate. It catalyses the reaction a purine 2'-deoxy-D-ribonucleoside + phosphate = a purine nucleobase + 2-deoxy-alpha-D-ribose 1-phosphate. Its function is as follows. Catalyzes the reversible phosphorolytic breakdown of the N-glycosidic bond in the beta-(deoxy)ribonucleoside molecules, with the formation of the corresponding free purine bases and pentose-1-phosphate. The sequence is that of Purine nucleoside phosphorylase DeoD-type from Chromobacterium violaceum (strain ATCC 12472 / DSM 30191 / JCM 1249 / CCUG 213 / NBRC 12614 / NCIMB 9131 / NCTC 9757 / MK).